The sequence spans 749 residues: 5-methyltetrahydropteroyltriglutamate--homocysteine methyltransferase (749 aa).

5-methyltetrahydropteroyltri-L-glutamate contacts are provided by residues 15–18 and lysine 114; that span reads RELK. Residues 425–427 and glutamate 478 each bind L-homocysteine; that span reads IGS. Residues 425 to 427 and glutamate 478 each bind L-methionine; that span reads IGS. Position 555 (tryptophan 555) interacts with 5-methyltetrahydropteroyltri-L-glutamate. An L-homocysteine-binding site is contributed by aspartate 593. Aspartate 593 lines the L-methionine pocket. Glutamate 599 lines the 5-methyltetrahydropteroyltri-L-glutamate pocket. Positions 636, 638, and 660 each coordinate Zn(2+). Histidine 689 acts as the Proton donor in catalysis. Zn(2+) is bound at residue cysteine 721.

It belongs to the vitamin-B12 independent methionine synthase family. It depends on Zn(2+) as a cofactor.

The enzyme catalyses 5-methyltetrahydropteroyltri-L-glutamate + L-homocysteine = tetrahydropteroyltri-L-glutamate + L-methionine. It functions in the pathway amino-acid biosynthesis; L-methionine biosynthesis via de novo pathway; L-methionine from L-homocysteine (MetE route): step 1/1. In terms of biological role, catalyzes the transfer of a methyl group from 5-methyltetrahydrofolate to homocysteine resulting in methionine formation. The protein is 5-methyltetrahydropteroyltriglutamate--homocysteine methyltransferase of Streptococcus pneumoniae serotype 4 (strain ATCC BAA-334 / TIGR4).